The primary structure comprises 147 residues: UPF0179 protein NP_3406A (147 aa).

It belongs to the UPF0179 family.

The protein is UPF0179 protein NP_3406A of Natronomonas pharaonis (strain ATCC 35678 / DSM 2160 / CIP 103997 / JCM 8858 / NBRC 14720 / NCIMB 2260 / Gabara) (Halobacterium pharaonis).